Reading from the N-terminus, the 271-residue chain is Large ribosomal subunit protein uL18 (271 aa).

A compositionally biased stretch (basic and acidic residues) spans Ile245–Arg264. A disordered region spans residues Ile245–Leu271.

The protein belongs to the universal ribosomal protein uL18 family. In terms of assembly, component of the large ribosomal subunit (LSU).

The protein resides in the cytoplasm. It is found in the nucleus. Component of the ribosome, a large ribonucleoprotein complex responsible for the synthesis of proteins in the cell. The small ribosomal subunit (SSU) binds messenger RNAs (mRNAs) and translates the encoded message by selecting cognate aminoacyl-transfer RNA (tRNA) molecules. The large subunit (LSU) contains the ribosomal catalytic site termed the peptidyl transferase center (PTC), which catalyzes the formation of peptide bonds, thereby polymerizing the amino acids delivered by tRNAs into a polypeptide chain. The nascent polypeptides leave the ribosome through a tunnel in the LSU and interact with protein factors that function in enzymatic processing, targeting, and the membrane insertion of nascent chains at the exit of the ribosomal tunnel. This chain is Large ribosomal subunit protein uL18 (RPL5), found in Dunaliella salina (Green alga).